Reading from the N-terminus, the 414-residue chain is COUP transcription factor 2 (414 aa).

The disordered stretch occupies residues 1 to 72; sequence MAMVVSTWRD…PGGPGSDKQQ (72 aa). Positions 27–37 are enriched in pro residues; that stretch reads PPVPGPPPGAP. A compositionally biased stretch (low complexity) spans 38–57; sequence HTPQTPGQGGPASTPAQTAA. Threonine 51 is modified (phosphothreonine). Residues 58 to 67 are compositionally biased toward gly residues; sequence GGQGGPGGPG. A DNA-binding region (nuclear receptor) is located at residues 76–151; that stretch reads HIECVVCGDK…VGMRREAVQR (76 aa). 2 consecutive NR C4-type zinc fingers follow at residues 79 to 99 and 115 to 139; these read CVVCGDKSSGKHYGQFTCEGC and CRANRNCPIDQHHRNQCQYCRLKKC. Residues 117-414 form an interaction with ZFPM2 region; the sequence is ANRNCPIDQH…SFNWPYMAIQ (298 aa). The 227-residue stretch at 177-403 folds into the NR LBD domain; that stretch reads YLSGYISLLL…TLIRDMLLSG (227 aa). Positions 337–414 are important for dimerization; the sequence is LQEKSQCALE…SFNWPYMAIQ (78 aa).

Belongs to the nuclear hormone receptor family. NR2 subfamily. As to quaternary structure, interacts with SQSTM1. Binds DNA as a dimer; homodimer or heterodimer with NR2F6. Interacts with NCOA1, NCOA2, NCOA3 and PPARGC1A. Interacts with ZFPM2.

It is found in the nucleus. Functionally, ligand-activated transcription factor. Activated by high concentrations of 9-cis-retinoic acid and all-trans-retinoic acid, but not by dexamethasone, cortisol or progesterone (in vitro). Regulation of the apolipoprotein A-I gene transcription. Binds to DNA site A. May be required to establish ovary identity during early gonad development. This chain is COUP transcription factor 2 (NR2F2), found in Bos taurus (Bovine).